A 156-amino-acid chain; its full sequence is Ribosome maturation factor RimP (156 aa).

This sequence belongs to the RimP family.

The protein localises to the cytoplasm. Functionally, required for maturation of 30S ribosomal subunits. This is Ribosome maturation factor RimP from Bacillus velezensis (strain DSM 23117 / BGSC 10A6 / LMG 26770 / FZB42) (Bacillus amyloliquefaciens subsp. plantarum).